The chain runs to 221 residues: NAD(P)H-hydrate epimerase (221 aa).

The region spanning Met10–Phe210 is the YjeF N-terminal domain. Asn58–Asp62 provides a ligand contact to (6S)-NADPHX. K(+) contacts are provided by Asn59 and Asp120. Residues Gly124–Val130 and Asp153 contribute to the (6S)-NADPHX site. Thr156 contacts K(+).

It belongs to the NnrE/AIBP family. The cofactor is K(+).

It catalyses the reaction (6R)-NADHX = (6S)-NADHX. The enzyme catalyses (6R)-NADPHX = (6S)-NADPHX. In terms of biological role, catalyzes the epimerization of the S- and R-forms of NAD(P)HX, a damaged form of NAD(P)H that is a result of enzymatic or heat-dependent hydration. This is a prerequisite for the S-specific NAD(P)H-hydrate dehydratase to allow the repair of both epimers of NAD(P)HX. The sequence is that of NAD(P)H-hydrate epimerase from Leuconostoc mesenteroides subsp. mesenteroides (strain ATCC 8293 / DSM 20343 / BCRC 11652 / CCM 1803 / JCM 6124 / NCDO 523 / NBRC 100496 / NCIMB 8023 / NCTC 12954 / NRRL B-1118 / 37Y).